The primary structure comprises 91 residues: LYR motif-containing protein 4 (91 aa).

2 residues coordinate pantetheine 4'-phosphate: Arg-6 and Lys-44. An N6-succinyllysine modification is found at Lys-47.

Belongs to the complex I LYR family. In terms of assembly, homodimer. Component of the mitochondrial core iron-sulfur cluster (ISC) complex composed of NFS1, LYRM4, NDUFAB1, ISCU, FXN, and FDX2; this complex is a heterohexamer containing two copies of each monomer. Component of the cyteine desulfurase complex composed of NFS1, LYRM4 and NDUFAB1; this complex contributes to the stability and cysteine desulfurase activity of NFS1. Interacts with FXN; this interaction is nickel-dependent. Interacts with the cytoplasmic form of NFS1; the complex increases the stability of NFS1. Forms a complex with the cytoplasmic form of NFS1; this complex increases the stability and cysteine desulfurase activity of NFS1. Interacts with NFS1. Component of a complex composed of FXN, NFS1, LYRM4 and ISCU.

Its subcellular location is the mitochondrion. It is found in the nucleus. The protein operates within cofactor biosynthesis; iron-sulfur cluster biosynthesis. Stabilizing factor, of the core iron-sulfur cluster (ISC) assembly complex, that regulates, in association with NDUFAB1, the stability and the cysteine desulfurase activity of NFS1 and participates in the [2Fe-2S] clusters assembly on the scaffolding protein ISCU. The core iron-sulfur cluster (ISC) assembly complex is involved in the de novo synthesis of a [2Fe-2S] cluster, the first step of the mitochondrial iron-sulfur protein biogenesis. This process is initiated by the cysteine desulfurase complex (NFS1:LYRM4:NDUFAB1) that produces persulfide which is delivered on the scaffold protein ISCU in a FXN-dependent manner. Then this complex is stabilized by FDX2 which provides reducing equivalents to accomplish the [2Fe-2S] cluster assembly. Finally, the [2Fe-2S] cluster is transferred from ISCU to chaperone proteins, including HSCB, HSPA9 and GLRX5. May also participates in the iron-sulfur protein biogenesis in the cytoplasm through its interaction with the cytoplasmic form of NFS1. This chain is LYR motif-containing protein 4, found in Mus musculus (Mouse).